Here is a 78-residue protein sequence, read N- to C-terminus: Small ribosomal subunit protein bS18 (78 aa).

It belongs to the bacterial ribosomal protein bS18 family. In terms of assembly, part of the 30S ribosomal subunit. Forms a tight heterodimer with protein bS6.

In terms of biological role, binds as a heterodimer with protein bS6 to the central domain of the 16S rRNA, where it helps stabilize the platform of the 30S subunit. This chain is Small ribosomal subunit protein bS18, found in Acidothermus cellulolyticus (strain ATCC 43068 / DSM 8971 / 11B).